A 203-amino-acid chain; its full sequence is tRNA (cytidine(56)-2'-O)-methyltransferase (203 aa).

S-adenosyl-L-methionine-binding positions include leucine 80, 109 to 113 (GAEKV), and 127 to 134 (IGNQPHSE). A disordered region spans residues 178-203 (AEQDKAEGKATPGKNWENSGFTGDNP). A compositionally biased stretch (polar residues) spans 193 to 203 (WENSGFTGDNP).

The protein belongs to the aTrm56 family. In terms of assembly, homodimer.

The protein resides in the cytoplasm. The catalysed reaction is cytidine(56) in tRNA + S-adenosyl-L-methionine = 2'-O-methylcytidine(56) in tRNA + S-adenosyl-L-homocysteine + H(+). Functionally, specifically catalyzes the AdoMet-dependent 2'-O-ribose methylation of cytidine at position 56 in tRNAs. The sequence is that of tRNA (cytidine(56)-2'-O)-methyltransferase from Pyrococcus horikoshii (strain ATCC 700860 / DSM 12428 / JCM 9974 / NBRC 100139 / OT-3).